The sequence spans 1016 residues: Formate dehydrogenase-O major subunit (1016 aa).

Residues 1–33 (MQVSRRQFFKICAGGMAGTTAAALGFAPSVALA) constitute a signal peptide (tat-type signal). In terms of domain architecture, 4Fe-4S Mo/W bis-MGD-type spans 43-106 (TRETRNTCTY…GLVDFIHSES (64 aa)). [4Fe-4S] cluster contacts are provided by C50, C53, C57, and C92. U196 is a non-standard amino acid (selenocysteine).

It belongs to the prokaryotic molybdopterin-containing oxidoreductase family. In terms of assembly, formate dehydrogenase is a membrane-bound complex, formed by subunits alpha, beta and gamma. Mo-bis(molybdopterin guanine dinucleotide) serves as cofactor. Requires [4Fe-4S] cluster as cofactor. Exported by the Tat system. The position of the signal peptide cleavage has not been experimentally proven.

Its subcellular location is the periplasm. The catalysed reaction is formate + NAD(+) = CO2 + NADH. Functionally, allows to use formate as major electron donor during aerobic respiration. Subunit alpha possibly forms the active site. The chain is Formate dehydrogenase-O major subunit (fdoG) from Escherichia coli (strain K12).